The following is a 478-amino-acid chain: Zinc metalloproteinase/disintegrin (478 aa).

The signal sequence occupies residues 1 to 20 (MIQVLLVTICLAAFPYQGSS). A propeptide spanning residues 21–187 (IILESGNVND…PIKKASHLNL (167 aa)) is cleaved from the precursor. The region spanning 193–389 (RYVEIVIVVD…QKPQCILKKP (197 aa)) is the Peptidase M12B domain. 3 disulfide bridges follow: C304–C384, C344–C368, and C346–C351. Position 329 (H329) interacts with Zn(2+). E330 is a catalytic residue. Zn(2+)-binding residues include H333 and H339. The propeptide occupies 390–408 (LRTDTVSTPVSGNELLEAR). Positions 397–478 (TPVSGNELLE…ADCPRNVLYG (82 aa)) constitute a Disintegrin domain. Disulfide bonds link C411/C420, C413/C421, C426/C440, C434/C464, C439/C443, and C452/C471. Positions 474-478 (NVLYG) are excised as a propeptide.

It belongs to the venom metalloproteinase (M12B) family. P-II subfamily. P-IIa sub-subfamily. It depends on Zn(2+) as a cofactor. Expressed by the venom gland.

It is found in the secreted. Snake venom zinc metalloproteinase that causes hemorrhage by provoking the degradation of the sub-endothelial matrix proteins (fibronectin, laminin, type IV collagen, nidogen, and gelatins). Its function is as follows. Displays low cytotoxicity. In vitro, inhibits cancer cell migration (human breast cancer cell line MDA-MB-231) with a significant rate after 24 hours of incubation. This Crotalus durissus collilineatus (Brazilian rattlesnake) protein is Zinc metalloproteinase/disintegrin (MPII).